We begin with the raw amino-acid sequence, 412 residues long: Argininosuccinate synthase (412 aa).

ATP is bound by residues 15–23 (AYSGGLDTS) and A42. Y93 and S98 together coordinate L-citrulline. Position 123 (G123) interacts with ATP. L-aspartate is bound by residues T125, N129, and D130. Position 129 (N129) interacts with L-citrulline. Positions 133, 185, 194, 270, and 282 each coordinate L-citrulline.

The protein belongs to the argininosuccinate synthase family. Type 1 subfamily. Homotetramer.

It localises to the cytoplasm. The enzyme catalyses L-citrulline + L-aspartate + ATP = 2-(N(omega)-L-arginino)succinate + AMP + diphosphate + H(+). It participates in amino-acid biosynthesis; L-arginine biosynthesis; L-arginine from L-ornithine and carbamoyl phosphate: step 2/3. This is Argininosuccinate synthase from Psychrobacter arcticus (strain DSM 17307 / VKM B-2377 / 273-4).